A 265-amino-acid polypeptide reads, in one-letter code: Glutamate racemase (265 aa).

Substrate is bound by residues 12-13 (DS) and 44-45 (YG). C75 functions as the Proton donor/acceptor in the catalytic mechanism. 76–77 (NT) contributes to the substrate binding site. The Proton donor/acceptor role is filled by C186. 187 to 188 (TH) serves as a coordination point for substrate.

This sequence belongs to the aspartate/glutamate racemases family.

It catalyses the reaction L-glutamate = D-glutamate. The protein operates within cell wall biogenesis; peptidoglycan biosynthesis. Functionally, provides the (R)-glutamate required for cell wall biosynthesis. In Pseudomonas aeruginosa (strain ATCC 15692 / DSM 22644 / CIP 104116 / JCM 14847 / LMG 12228 / 1C / PRS 101 / PAO1), this protein is Glutamate racemase.